A 1039-amino-acid polypeptide reads, in one-letter code: uncharacterized protein (1039 aa).

Over residues 1-19 the composition is skewed to basic residues; that stretch reads MSLLMAHRKSKSSQRKLRN. A disordered region spans residues 1–38; the sequence is MSLLMAHRKSKSSQRKLRNRSSSLTPQKRRIRASKGSH.

This is an uncharacterized protein from Sinorhizobium fredii (strain NBRC 101917 / NGR234).